A 165-amino-acid chain; its full sequence is Glutamyl-tRNA(Gln) amidotransferase subunit F, mitochondrial (165 aa).

The N-terminal 19 residues, 1–19 (MKSILRSTTRNLITSSRRF), are a transit peptide targeting the mitochondrion.

Belongs to the GatF family. Subunit of the heterotrimeric GatFAB amidotransferase (AdT) complex, composed of A, B and F subunits.

The protein localises to the mitochondrion inner membrane. The catalysed reaction is L-glutamyl-tRNA(Gln) + L-glutamine + ATP + H2O = L-glutaminyl-tRNA(Gln) + L-glutamate + ADP + phosphate + H(+). Allows the formation of correctly charged Gln-tRNA(Gln) through the transamidation of misacylated Glu-tRNA(Gln) in the mitochondria. The reaction takes place in the presence of glutamine and ATP through an activated gamma-phospho-Glu-tRNA(Gln). Required for proper protein synthesis within the mitochondrion. In Candida albicans (strain WO-1) (Yeast), this protein is Glutamyl-tRNA(Gln) amidotransferase subunit F, mitochondrial.